A 166-amino-acid chain; its full sequence is Probable chemoreceptor glutamine deamidase CheD (166 aa).

Belongs to the CheD family.

The catalysed reaction is L-glutaminyl-[protein] + H2O = L-glutamyl-[protein] + NH4(+). In terms of biological role, probably deamidates glutamine residues to glutamate on methyl-accepting chemotaxis receptors (MCPs), playing an important role in chemotaxis. The protein is Probable chemoreceptor glutamine deamidase CheD of Desulforamulus reducens (strain ATCC BAA-1160 / DSM 100696 / MI-1) (Desulfotomaculum reducens).